The following is a 399-amino-acid chain: Elongation factor Tu (399 aa).

A tr-type G domain is found at 10 to 204 (KPHVNIGTIG…AVDASIPEPE (195 aa)). Residues 19–26 (GHVDHGKT) are G1. Residue 19–26 (GHVDHGKT) participates in GTP binding. T26 serves as a coordination point for Mg(2+). Residues 60–64 (GITIN) form a G2 region. The G3 stretch occupies residues 81-84 (DCPG). GTP contacts are provided by residues 81–85 (DCPGH) and 136–139 (NKCD). Residues 136-139 (NKCD) are G4. The interval 174–176 (SGL) is G5.

It belongs to the TRAFAC class translation factor GTPase superfamily. Classic translation factor GTPase family. EF-Tu/EF-1A subfamily. Monomer.

It is found in the cytoplasm. The catalysed reaction is GTP + H2O = GDP + phosphate + H(+). In terms of biological role, GTP hydrolase that promotes the GTP-dependent binding of aminoacyl-tRNA to the A-site of ribosomes during protein biosynthesis. This is Elongation factor Tu from Prochlorococcus marinus (strain MIT 9515).